The following is a 360-amino-acid chain: Photosystem II protein D1 3 (360 aa).

3 helical membrane passes run 29–46, 118–133, and 142–156; these read YVGW…AATV, HFLI…QWEL, and WICV…SATA. His-118 contacts chlorophyll a. Pheophytin a is bound at residue Tyr-126. The [CaMn4O5] cluster site is built by Asp-170 and Glu-189. A helical membrane pass occupies residues 197 to 218; that stretch reads FHMLGVAGVFGGSLFSAMHGSL. Residue His-198 participates in chlorophyll a binding. Residues His-215 and 264–265 contribute to the a quinone site; that span reads SF. A Fe cation-binding site is contributed by His-215. Position 272 (His-272) interacts with Fe cation. A helical transmembrane segment spans residues 274-288; sequence FLAAWPVIGIWFTAL. Residues His-332, Glu-333, Asp-342, and Ala-344 each contribute to the [CaMn4O5] cluster site. Residues 345–360 constitute a propeptide that is removed on maturation; it reads AGEVAPVALTAPAING.

The protein belongs to the reaction center PufL/M/PsbA/D family. In terms of assembly, PSII is composed of 1 copy each of membrane proteins PsbA, PsbB, PsbC, PsbD, PsbE, PsbF, PsbH, PsbI, PsbJ, PsbK, PsbL, PsbM, PsbT, PsbX, PsbY, PsbZ, Psb30/Ycf12, peripheral proteins PsbO, CyanoQ (PsbQ), PsbU, PsbV and a large number of cofactors. It forms dimeric complexes. It depends on The D1/D2 heterodimer binds P680, chlorophylls that are the primary electron donor of PSII, and subsequent electron acceptors. It shares a non-heme iron and each subunit binds pheophytin, quinone, additional chlorophylls, carotenoids and lipids. D1 provides most of the ligands for the Mn4-Ca-O5 cluster of the oxygen-evolving complex (OEC). There is also a Cl(-1) ion associated with D1 and D2, which is required for oxygen evolution. The PSII complex binds additional chlorophylls, carotenoids and specific lipids. as a cofactor. In terms of processing, tyr-161 forms a radical intermediate that is referred to as redox-active TyrZ, YZ or Y-Z. Post-translationally, C-terminally processed by CtpA; processing is essential to allow assembly of the oxygen-evolving complex and thus photosynthetic growth.

The protein localises to the cellular thylakoid membrane. It carries out the reaction 2 a plastoquinone + 4 hnu + 2 H2O = 2 a plastoquinol + O2. In terms of biological role, photosystem II (PSII) is a light-driven water:plastoquinone oxidoreductase that uses light energy to abstract electrons from H(2)O, generating O(2) and a proton gradient subsequently used for ATP formation. It consists of a core antenna complex that captures photons, and an electron transfer chain that converts photonic excitation into a charge separation. The D1/D2 (PsbA/PsbD) reaction center heterodimer binds P680, the primary electron donor of PSII as well as several subsequent electron acceptors. The sequence is that of Photosystem II protein D1 3 from Trichormus variabilis (strain ATCC 29413 / PCC 7937) (Anabaena variabilis).